The following is a 327-amino-acid chain: Malate dehydrogenase (327 aa).

NAD(+) is bound by residues 20–25 and Asp44; that span reads GAGRVG. The substrate site is built by Arg93 and Arg99. NAD(+)-binding positions include Asn106 and 129–131; that span reads VTN. Substrate contacts are provided by Asn131 and Arg162. The active-site Proton acceptor is His186.

The protein belongs to the LDH/MDH superfamily. MDH type 3 family.

It catalyses the reaction (S)-malate + NAD(+) = oxaloacetate + NADH + H(+). In terms of biological role, catalyzes the reversible oxidation of malate to oxaloacetate. The sequence is that of Malate dehydrogenase from Nostoc punctiforme (strain ATCC 29133 / PCC 73102).